The following is a 323-amino-acid chain: MTNFKWIVAAAGLLFGQVLAAPTATSTHAKRATVSDAAFGYASLNGGTTGGAGGTTTTVSSYAAFTSAVSGDDAKVVYVDGTIKQTADQVKIGSNTSIIGKDANAILEGFGVLVKEKENVIIRNLGVSKVLADNGDAIGVQYSNNVWIDHCDVSSDRDHDKDYYDGLIDITHGSDYVTVSNTFIHDHWKASLVGHSDSNEDEDSGHLTVTYANNYWYNVNSRAPSFRFGTGHVYNSYYLDVSDGINTRDGAQLLVESNQFVDSKKALYSTDDGYAVSNDNDFGDSENTAEEGTLTSMPYDYTLLGSANVKAAVVGTAGQTLTF.

The signal sequence occupies residues 1 to 31; that stretch reads MTNFKWIVAAAGLLFGQVLAAPTATSTHAKR. N-linked (GlcNAc...) asparagine glycosylation is present at Asn-95. Ca(2+) is bound by residues Asp-136, Asp-165, and Asp-169. Arg-222 is an active-site residue.

Belongs to the polysaccharide lyase 1 family. The cofactor is Ca(2+).

The protein localises to the secreted. It catalyses the reaction Eliminative cleavage of (1-&gt;4)-alpha-D-galacturonan to give oligosaccharides with 4-deoxy-alpha-D-galact-4-enuronosyl groups at their non-reducing ends.. Pectinolytic enzyme consist of four classes of enzymes: pectin lyase, polygalacturonase, pectin methylesterase and rhamnogalacturonase. Among pectinolytic enzymes, pectin lyase is the most important in depolymerization of pectin, since it cleaves internal glycosidic bonds of highly methylated pectins. Favors pectate, the anion, over pectin, the methyl ester. The protein is Pectate lyase A (plyA) of Aspergillus niger.